Reading from the N-terminus, the 164-residue chain is Hydroxylaminobenzene mutase HabB (164 aa).

4 consecutive transmembrane segments (helical) span residues leucine 16–methionine 36, glycine 50–glycine 70, phenylalanine 78–tryptophan 98, and leucine 121–leucine 141.

The protein resides in the cell membrane. The enzyme catalyses N-phenylhydroxylamine = 2-aminophenol. Its activity is regulated as follows. Addition of ZnSO(4) decreases the activity to 70%. Its function is as follows. Catalyzes the rearrangement of hydroxylaminobenzene to 2-aminophenol. This chain is Hydroxylaminobenzene mutase HabB (habB), found in Ectopseudomonas oleovorans (Pseudomonas oleovorans).